We begin with the raw amino-acid sequence, 430 residues long: Dynactin subunit 2 (430 aa).

Disordered regions lie at residues 1–51 (MSEG…IDRS) and 201–228 (SLSSSTTEQNTQQPSNNNTTTNITSSSS). Residues 32 to 44 (SISNLADESSELV) show a composition bias toward polar residues. 2 coiled-coil regions span residues 241–319 (TGEQ…QDET) and 397–430 (DDSFKSNLLTIKSNIQQLESRIETLQNRQQQQQQ).

This sequence belongs to the dynactin subunit 2 family. As to quaternary structure, subunit of dynactin, a multiprotein complex associated with dynein.

The protein resides in the cytoplasm. Its subcellular location is the cytoskeleton. The protein localises to the membrane. In terms of biological role, modulates cytoplasmic dynein binding to an organelle, and plays a role in prometaphase chromosome alignment and spindle organization during mitosis. The sequence is that of Dynactin subunit 2 (dynB) from Dictyostelium discoideum (Social amoeba).